Consider the following 280-residue polypeptide: Vacuolar protein sorting-associated protein 71 (280 aa).

A compositionally biased stretch (polar residues) spans 64 to 73 (RSEGDGNSIS). The disordered stretch occupies residues 64-92 (RSEGDGNSISRQDDRNSKNSHSFEERYTQ). Residues 74–92 (RQDDRNSKNSHSFEERYTQ) show a composition bias toward basic and acidic residues. 8 residues coordinate Zn(2+): Cys-244, Cys-247, Cys-256, Cys-259, Cys-264, Cys-268, His-272, and Cys-277. The segment at 244–277 (CSICGGYDSISSCVNCGNKICSVSCFKLHNETRC) adopts an HIT-type zinc-finger fold.

In terms of assembly, belongs to the SWR1 complex at least composed of ACT1, ARP4, RVB1, RVB2, ARP6, YAF9, VPS71, VPS72, SWC3, SWC4, SWC5, SWR1 and HTZ1.

The protein localises to the nucleus. Functionally, participates in the catalytic exchange of histone H2A for the H2A variant HZT1, an euchromatin-specific factor, leading to chromatin remodeling and changes in transcription of targeted genes. Indirectly involved in vacuolar protein sorting. This is Vacuolar protein sorting-associated protein 71 (VPS71) from Saccharomyces cerevisiae (strain ATCC 204508 / S288c) (Baker's yeast).